A 433-amino-acid chain; its full sequence is Pyrimidine-nucleoside phosphorylase (433 aa).

Lys-81–Ser-83 provides a ligand contact to phosphate. Residues Gly-88 and Thr-90 each contribute to the K(+) site. Residues Thr-92, Lys-108 to Ser-110, and Thr-120 contribute to the phosphate site. Substrate-binding residues include Arg-168 and Lys-187. K(+) contacts are provided by Leu-243, Ala-246, and Glu-255.

The protein belongs to the thymidine/pyrimidine-nucleoside phosphorylase family. As to quaternary structure, homodimer. Requires K(+) as cofactor.

The catalysed reaction is uridine + phosphate = alpha-D-ribose 1-phosphate + uracil. It catalyses the reaction thymidine + phosphate = 2-deoxy-alpha-D-ribose 1-phosphate + thymine. It carries out the reaction 2'-deoxyuridine + phosphate = 2-deoxy-alpha-D-ribose 1-phosphate + uracil. Catalyzes phosphorolysis of the pyrimidine nucleosides uridine, thymidine and 2'-deoxyuridine with the formation of the corresponding pyrimidine base and ribose-1-phosphate. The sequence is that of Pyrimidine-nucleoside phosphorylase (pdp) from Staphylococcus epidermidis (strain ATCC 35984 / DSM 28319 / BCRC 17069 / CCUG 31568 / BM 3577 / RP62A).